We begin with the raw amino-acid sequence, 580 residues long: Proline--tRNA ligase (580 aa).

It belongs to the class-II aminoacyl-tRNA synthetase family. ProS type 1 subfamily. As to quaternary structure, homodimer.

Its subcellular location is the cytoplasm. The enzyme catalyses tRNA(Pro) + L-proline + ATP = L-prolyl-tRNA(Pro) + AMP + diphosphate. Functionally, catalyzes the attachment of proline to tRNA(Pro) in a two-step reaction: proline is first activated by ATP to form Pro-AMP and then transferred to the acceptor end of tRNA(Pro). As ProRS can inadvertently accommodate and process non-cognate amino acids such as alanine and cysteine, to avoid such errors it has two additional distinct editing activities against alanine. One activity is designated as 'pretransfer' editing and involves the tRNA(Pro)-independent hydrolysis of activated Ala-AMP. The other activity is designated 'posttransfer' editing and involves deacylation of mischarged Ala-tRNA(Pro). The misacylated Cys-tRNA(Pro) is not edited by ProRS. In Albidiferax ferrireducens (strain ATCC BAA-621 / DSM 15236 / T118) (Rhodoferax ferrireducens), this protein is Proline--tRNA ligase.